Consider the following 142-residue polypeptide: 5-hydroxymethyl-dUMP N-hydrolase (142 aa).

Residues Gly-7, Ile-9, Arg-10, Gly-11, Ser-78, Gly-80, Glu-84, and Ser-108 each coordinate 5-hydroxymethyl-dUMP.

Belongs to the 2'-deoxynucleoside 5'-phosphate N-hydrolase 1 family. As to quaternary structure, monomer and homodimer.

The protein resides in the cytoplasm. Its subcellular location is the nucleus. The catalysed reaction is 5-hydroxymethyl-dUMP + H2O = 5-hydroxymethyluracil + 2-deoxy-D-ribose 5-phosphate. In terms of biological role, part of a nucleotide salvage pathway that eliminates epigenetically modified 5-hydroxymethyl-dCMP (hmdCMP) in a two-step process entailing deamination to cytotoxic 5-hydroxymethyl-dUMP (hmdUMP), followed by its hydrolysis into 5-hydroxymethyluracil (hmU) and 2-deoxy-D-ribose 5-phosphate (deoxyribosephosphate). Catalyzes the second step in that pathway, the hydrolysis of the N-glycosidic bond in hmdUMP, degrading this cytotoxic nucleotide to avoid its genomic integration. In Tetraodon nigroviridis (Spotted green pufferfish), this protein is 5-hydroxymethyl-dUMP N-hydrolase (dnph1).